Reading from the N-terminus, the 295-residue chain is 4-diphosphocytidyl-2-C-methyl-D-erythritol kinase (295 aa).

Residue Lys18 is part of the active site. Residue 101 to 111 participates in ATP binding; the sequence is PMGGGIGGGSS. Asp143 is a catalytic residue.

It belongs to the GHMP kinase family. IspE subfamily.

It carries out the reaction 4-CDP-2-C-methyl-D-erythritol + ATP = 4-CDP-2-C-methyl-D-erythritol 2-phosphate + ADP + H(+). Its pathway is isoprenoid biosynthesis; isopentenyl diphosphate biosynthesis via DXP pathway; isopentenyl diphosphate from 1-deoxy-D-xylulose 5-phosphate: step 3/6. Its function is as follows. Catalyzes the phosphorylation of the position 2 hydroxy group of 4-diphosphocytidyl-2C-methyl-D-erythritol. This Vibrio vulnificus (strain YJ016) protein is 4-diphosphocytidyl-2-C-methyl-D-erythritol kinase.